The primary structure comprises 386 residues: Citrate synthase (386 aa).

Catalysis depends on residues His-266 and Asp-322.

Belongs to the citrate synthase family.

It carries out the reaction oxaloacetate + acetyl-CoA + H2O = citrate + CoA + H(+). Its pathway is carbohydrate metabolism; tricarboxylic acid cycle; isocitrate from oxaloacetate: step 1/2. The protein is Citrate synthase (gltA) of Acidithiobacillus ferridurans.